The chain runs to 999 residues: Probable basic-leucine zipper transcription factor N (999 aa).

2 stretches are compositionally biased toward low complexity: residues Met-1 to Gln-79 and Asn-88 to Asn-126. Residues Met-1–Asn-126 are disordered. Coiled-coil stretches lie at residues Gln-148–Met-198 and Gly-232–Ser-282. A compositionally biased stretch (polar residues) spans Glu-286–Leu-302. 3 disordered regions span residues Glu-286–Gln-406, Gln-450–Asn-533, and Glu-601–Gln-620. A compositionally biased stretch (low complexity) spans Ser-303 to Asn-347. The span at Met-348 to Gln-406 shows a compositional bias: polar residues. The stretch at Ile-423–Gln-451 forms a coiled coil. A compositionally biased stretch (low complexity) spans Gln-450–Gln-517. In terms of domain architecture, bZIP spans Glu-601–Leu-664. Residues Lys-602–Arg-632 form a basic motif region. Residues Ile-636–Leu-643 are leucine-zipper. 3 disordered regions span residues Lys-665 to Thr-711, Gln-779 to Glu-807, and Val-870 to Thr-899. The segment covering Ser-682–Gln-692 has biased composition (acidic residues). The stretch at His-921–Leu-950 forms a coiled coil.

The protein belongs to the bZIP family.

The protein resides in the nucleus. Probable transcriptional regulator. This Dictyostelium discoideum (Social amoeba) protein is Probable basic-leucine zipper transcription factor N (bzpN).